The chain runs to 244 residues: MKIDLNADLGEGYASDAELLTLVSSANIACGFHAGDAQTMQACVREAIKNGVAIGAHPSFPDRENFGRRAMQLPPETVYAQTLYQIGALAAITRAQGGVMCHVKPHGMLYNQAAKEAQLADAIARAVYACDPALILVGLAGSELIRAGKQYGLTTREEVFADRGYQADGSLVPRSQPGALIENEEQALEQTLEMVQHGRVKSITGEWATVTAQTVCLHGDGEHALAFARRLRSTFAEKGIVVAA.

The protein belongs to the LamB/PxpA family. As to quaternary structure, forms a complex composed of PxpA, PxpB and PxpC.

The catalysed reaction is 5-oxo-L-proline + ATP + 2 H2O = L-glutamate + ADP + phosphate + H(+). In terms of biological role, catalyzes the cleavage of 5-oxoproline to form L-glutamate coupled to the hydrolysis of ATP to ADP and inorganic phosphate. The protein is 5-oxoprolinase subunit A of Escherichia coli O17:K52:H18 (strain UMN026 / ExPEC).